Here is a 194-residue protein sequence, read N- to C-terminus: UPF0301 protein BPEN_258 (194 aa).

The protein belongs to the UPF0301 (AlgH) family.

In Blochmanniella pennsylvanica (strain BPEN), this protein is UPF0301 protein BPEN_258.